The primary structure comprises 194 residues: Fe/S biogenesis protein NfuA (194 aa).

[4Fe-4S] cluster contacts are provided by C152 and C155.

It belongs to the NfuA family. As to quaternary structure, homodimer. It depends on [4Fe-4S] cluster as a cofactor.

Its function is as follows. Involved in iron-sulfur cluster biogenesis. Binds a 4Fe-4S cluster, can transfer this cluster to apoproteins, and thereby intervenes in the maturation of Fe/S proteins. Could also act as a scaffold/chaperone for damaged Fe/S proteins. The protein is Fe/S biogenesis protein NfuA of Pseudomonas fluorescens (strain SBW25).